Consider the following 510-residue polypeptide: MDSKTTFLTFLLCIFIFSHFSPSTSKSLTEKPLSFSPSASLPTLTAERLIKGFNLMPTRDVNVIDEEGSEAPRLVERAFDLPAAVDRRGSGGSPSVQDFGHHAGYYKLPNSKAARMFYFFFESRTNKADPVVIWLTGGPGCSSELALFYENGPFTVSNNSSLSWNEFGWDKASNLIYVDQPVGTGFSYTSDQSDLRHDEDGVSNDLYDFLQAFFKEHPQFVKNDFYITGESYAGHYIPALASRVHRGNKNKEGTHINLKGFAIGNGLTNPEIQYGAYADYALDMNLITQSDHDNLNRYYATCQQSIKECSADGGEGDACASSYTVCNNIFQKIMDIAGNVNYYDVRKQCEGSLCYDFSNMENFLNQKSVRKALGVGDIEFVSCSTAVYEAMQMDWMRNLEVGIPALLQDGIKLLVYAGEYDLICNWLGNSKWVHEMEWSGQKEFVAAATVPFHVDNKEAGLMKNYGSLTFLKVHDAGHMVPMDQPKAALQMLQNWMQGKLSTPTGRTAHQ.

The first 25 residues, 1–25 (MDSKTTFLTFLLCIFIFSHFSPSTS), serve as a signal peptide directing secretion. 3 disulfides stabilise this stretch: Cys-141-Cys-383, Cys-309-Cys-326, and Cys-349-Cys-354. N-linked (GlcNAc...) asparagine glycosylation is found at Asn-158 and Asn-159. Residue Ser-231 is part of the active site. Active-site residues include Asp-421 and His-478.

The protein belongs to the peptidase S10 family. In terms of tissue distribution, ubiquitous.

It localises to the secreted. Its function is as follows. Probable carboxypeptidase. The chain is Serine carboxypeptidase-like 48 (SCPL48) from Arabidopsis thaliana (Mouse-ear cress).